We begin with the raw amino-acid sequence, 332 residues long: DNA-directed RNA polymerase subunit alpha (332 aa).

The interval 1–232 (MKGYLKDFLK…DQLSVFVDLE (232 aa)) is alpha N-terminal domain (alpha-NTD). The tract at residues 247–332 (IDPVLLRPID…SLGDRARIAG (86 aa)) is alpha C-terminal domain (alpha-CTD).

Belongs to the RNA polymerase alpha chain family. As to quaternary structure, homodimer. The RNAP catalytic core consists of 2 alpha, 1 beta, 1 beta' and 1 omega subunit. When a sigma factor is associated with the core the holoenzyme is formed, which can initiate transcription.

The catalysed reaction is RNA(n) + a ribonucleoside 5'-triphosphate = RNA(n+1) + diphosphate. Functionally, DNA-dependent RNA polymerase catalyzes the transcription of DNA into RNA using the four ribonucleoside triphosphates as substrates. The polypeptide is DNA-directed RNA polymerase subunit alpha (Halorhodospira halophila (strain DSM 244 / SL1) (Ectothiorhodospira halophila (strain DSM 244 / SL1))).